The primary structure comprises 937 residues: Hyphally-regulated protein (937 aa).

The first 20 residues, 1–20 (MKVVSNFIFTILLTLNLSAA), serve as a signal peptide directing secretion. An N-linked (GlcNAc...) asparagine glycan is attached at N16. A helical membrane pass occupies residues 42-62 (VHSGATWAILGTTLCSFFGGL). The N-linked (GlcNAc...) asparagine glycan is linked to N236. The tract at residues 332–483 (SAPESESDLN…QSITSSPGQS (152 aa)) is disordered. Over residues 344–392 (TTSSIETSSYSSAATESSVVSESSSAVDSLTSSSLSSKSESSDVVSSTT) the composition is skewed to low complexity. Residues 393–414 (NIESSSTAIETTMNSESSTDAG) show a composition bias toward polar residues. Residues 415–475 (SSSISQSESS…SNALSSTEQS (61 aa)) are compositionally biased toward low complexity. 6 N-linked (GlcNAc...) asparagine glycosylation sites follow: N449, N488, N580, N585, N595, and N603. Residues 567–590 (DATTTTTTSTGGDNSTGGNESGSN) are compositionally biased toward low complexity. The segment at 567–857 (DATTTTTTST…VANPVTTSTE (291 aa)) is disordered. The span at 591–609 (HGPGNGSTEGSGNGSGAGS) shows a compositional bias: gly residues. Repeat unit 1 spans residues 610-613 (NEGS). Residues 610-753 (NEGSQSGPNN…GAGNGSNEGS (144 aa)) form a 7 X 4 AA repeats of N-E-G-S region. Residues N619, N631, N641, and N649 are each glycosylated (N-linked (GlcNAc...) asparagine). Gly residues-rich tracts occupy residues 619-631 (NGSG…GSNN) and 641-665 (NGSG…GSGS). A run of 4 repeats spans residues 666–669 (NEGS), 680–683 (NEGS), 690–693 (NEGS), and 698–701 (NEGS). Residues 666–682 (NEGSQSGSGSQPGPNEG) are compositionally biased toward low complexity. Gly residues predominate over residues 699–725 (EGSGSGSGSGSNNGSGSGSQSGSGSGS). A glycan (N-linked (GlcNAc...) asparagine) is linked at N711. Over residues 726 to 742 (QSGSESGSNSGSNEGSN) the composition is skewed to low complexity. The stretch at 738-741 (NEGS) is repeat 6. A compositionally biased stretch (gly residues) spans 743-801 (PGAGNGSNEGSGQGSGNGSEAGSGQGSGPNNGSGSGHNDGSGSGSNQGSNPGAGSGSGS). N747 carries an N-linked (GlcNAc...) asparagine glycan. The stretch at 750–753 (NEGS) is repeat 7. N759 and N773 each carry an N-linked (GlcNAc...) asparagine glycan. A compositionally biased stretch (low complexity) spans 802 to 814 (ESGSKAGSHSGSN). Residues 817–829 (AKTDSIEGFHTES) show a composition bias toward basic and acidic residues. Positions 841–851 (ATVTGNSVANP) are enriched in polar residues. 2 N-linked (GlcNAc...) asparagine glycosylation sites follow: N897 and N913. A lipid anchor (GPI-anchor amidated asparagine) is attached at N913. A propeptide spans 914 to 937 (GSSIVTGGKSILFGLIVSMVVLFM) (removed in mature form).

It localises to the cell membrane. Its subcellular location is the secreted. It is found in the cell wall. Nonessential component of the hyphal cell wall. The protein is Hyphally-regulated protein (HYR1) of Candida albicans (Yeast).